The primary structure comprises 82 residues: Small ribosomal subunit protein bS16 (82 aa).

The protein belongs to the bacterial ribosomal protein bS16 family.

This Cyanothece sp. (strain PCC 7425 / ATCC 29141) protein is Small ribosomal subunit protein bS16.